Here is a 310-residue protein sequence, read N- to C-terminus: Ribosomal protein uL3 glutamine methyltransferase (310 aa).

This sequence belongs to the protein N5-glutamine methyltransferase family. PrmB subfamily.

The enzyme catalyses L-glutaminyl-[ribosomal protein uL3] + S-adenosyl-L-methionine = N(5)-methyl-L-glutaminyl-[ribosomal protein uL3] + S-adenosyl-L-homocysteine + H(+). Methylates large ribosomal subunit protein uL3 on a specific glutamine residue. In Aliivibrio fischeri (strain ATCC 700601 / ES114) (Vibrio fischeri), this protein is Ribosomal protein uL3 glutamine methyltransferase.